A 458-amino-acid polypeptide reads, in one-letter code: GTPase Obg (458 aa).

The Obg domain occupies 1–157 (MSFLDRVKIY…ITLYLELKVL (157 aa)). Positions 158 to 326 (ADLGLVGFPN…VLNEIVKVIS (169 aa)) constitute an OBG-type G domain. Residues 164 to 171 (GFPNAGKS), 189 to 193 (FTTLN), 210 to 213 (DIPG), 280 to 283 (NKAD), and 307 to 309 (SAA) each bind GTP. 2 residues coordinate Mg(2+): S171 and T191. The OCT domain maps to 341–419 (AVHGVEPLFK…VGQKEFEWSG (79 aa)). Residues 420 to 458 (TELDSERAEQPDFEGYKRRTTQAERLEKRRQRRLKKEEK) are disordered. The segment covering 423–446 (DSERAEQPDFEGYKRRTTQAERLE) has biased composition (basic and acidic residues). Residues 447–458 (KRRQRRLKKEEK) show a composition bias toward basic residues.

This sequence belongs to the TRAFAC class OBG-HflX-like GTPase superfamily. OBG GTPase family. As to quaternary structure, monomer. It depends on Mg(2+) as a cofactor.

The protein localises to the cytoplasm. An essential GTPase which binds GTP, GDP and possibly (p)ppGpp with moderate affinity, with high nucleotide exchange rates and a fairly low GTP hydrolysis rate. Plays a role in control of the cell cycle, stress response, ribosome biogenesis and in those bacteria that undergo differentiation, in morphogenesis control. This Elusimicrobium minutum (strain Pei191) protein is GTPase Obg.